A 412-amino-acid polypeptide reads, in one-letter code: MSVPTHQQDLIALLEERGFVHQCTDRDGLAAHLAAGPATAYLGFDATADSLHVGHLQGLMLMRWLQKAGHRPLLLIGGATTRIGDPSFRDSSRPILTEAQIQANIDGIARVFSRYVELHDDSLVNNAEWLDGVGYLEFLDRVGRHFSINRLLTFDAIRQRLDREHSLSFLEFGYTLLQAYDFVELSRRRGCTLQLGGADQWANIINGVELSRRQGGAQLFGLTMPLLATSDGRKMGKSAQGAVWLNAERLAPFDFWQFWRNCDDRDVGRFLALFSELPMDEVRRLGALQGAELNEAKVVLANAATALAHGEHAARSAADAARGVFADGTRDSGLPVMKLSRARLAQGLSLTDLLLEHAIQPSRSAVRRLAAGGGLRLDGTPVSDPDTPLAGEVDGLRLSLGKKQHLHLRLED.

Tyr-41 serves as a coordination point for L-tyrosine. The short motif at 46–55 (ATADSLHVGH) is the 'HIGH' region element. 2 residues coordinate L-tyrosine: Tyr-174 and Gln-178. The 'KMSKS' region motif lies at 234–238 (KMGKS). Residue Lys-237 coordinates ATP. Residues 348–411 (LSLTDLLLEH…KKQHLHLRLE (64 aa)) enclose the S4 RNA-binding domain.

Belongs to the class-I aminoacyl-tRNA synthetase family. TyrS type 1 subfamily. In terms of assembly, homodimer.

The protein resides in the cytoplasm. The enzyme catalyses tRNA(Tyr) + L-tyrosine + ATP = L-tyrosyl-tRNA(Tyr) + AMP + diphosphate + H(+). Its function is as follows. Catalyzes the attachment of tyrosine to tRNA(Tyr) in a two-step reaction: tyrosine is first activated by ATP to form Tyr-AMP and then transferred to the acceptor end of tRNA(Tyr). In Pseudomonas aeruginosa (strain ATCC 15692 / DSM 22644 / CIP 104116 / JCM 14847 / LMG 12228 / 1C / PRS 101 / PAO1), this protein is Tyrosine--tRNA ligase 1.